We begin with the raw amino-acid sequence, 203 residues long: Small ribosomal subunit protein uS4 (203 aa).

Residues 20-45 form a disordered region; the sequence is LPGLTRKRPKNTNPPGMHGAERKKKS. An S4 RNA-binding domain is found at 92-155; that stretch reads MRLDCIVFRL…SSRKLVAAYA (64 aa).

The protein belongs to the universal ribosomal protein uS4 family. As to quaternary structure, part of the 30S ribosomal subunit. Contacts protein S5. The interaction surface between S4 and S5 is involved in control of translational fidelity.

One of the primary rRNA binding proteins, it binds directly to 16S rRNA where it nucleates assembly of the body of the 30S subunit. Its function is as follows. With S5 and S12 plays an important role in translational accuracy. The chain is Small ribosomal subunit protein uS4 from Synechococcus sp. (strain JA-3-3Ab) (Cyanobacteria bacterium Yellowstone A-Prime).